The primary structure comprises 588 residues: Adenine deaminase (588 aa).

It belongs to the metallo-dependent hydrolases superfamily. Adenine deaminase family. As to quaternary structure, homodimer. Mn(2+) serves as cofactor.

It carries out the reaction adenine + H2O + H(+) = hypoxanthine + NH4(+). The sequence is that of Adenine deaminase from Shigella flexneri serotype 5b (strain 8401).